The sequence spans 989 residues: Presequence protease, mitochondrial (989 aa).

A mitochondrion-targeting transit peptide spans 1 to 16; sequence MLRFQRFASSYAQAQA. Zn(2+) is bound at residue histidine 84. Glutamate 87 functions as the Proton acceptor in the catalytic mechanism. A Zn(2+)-binding site is contributed by histidine 88. Residue glutamate 160 is part of the active site. Glutamate 185 provides a ligand contact to Zn(2+). A Phosphoserine modification is found at serine 920. 972 to 979 contributes to the ATP binding site; it reads GPGIEGKT.

The protein belongs to the peptidase M16 family. PreP subfamily. Monomer and homodimer; homodimerization is induced by binding of the substrate. Requires Zn(2+) as cofactor.

The protein resides in the mitochondrion intermembrane space. It localises to the mitochondrion matrix. Activated by nucleotides, including ATP, GTP, CTP, UTP, and ADP. Activated by copper, manganese, calcium and magnesium ions; copper and manganese restore activity following inactivation by EDTA (ethylenediaminetetraacetic acid). Inhibited by metal chelators including EDTA, EGTA (ethylene glycol bis(2-aminoethyl)tetraacetic acid), and 1,10-phenanthroline. Inhibited by copper, zinc, and iron ions. Also inhibited by dithiothreitol p-mercuribenzenesulfonic acid, N-ethylmaleimide, protoporphyrin, hemin, protamine and triarginine. Degrades mitochondrial transit peptides after their cleavage in the intermembrane space or in the matrix, and presequence peptides; clearance of these peptides is required to keep the presequence processing machinery running. Preferentially cleaves the N-terminal side of paired basic amino acid residues. Also degrades other unstructured peptides. May function as an ATP-dependent peptidase as opposed to a metalloendopeptidase. The chain is Presequence protease, mitochondrial from Saccharomyces cerevisiae (strain ATCC 204508 / S288c) (Baker's yeast).